The sequence spans 283 residues: PTS system mannose-specific EIID component (283 aa).

Met1 is modified (N-formylmethionine). The Cytoplasmic portion of the chain corresponds to 1–14 (MVDTTQTTTEKKLT). The region spanning 11–281 (KKLTQSDIRG…GIAGYACGLL (271 aa)) is the PTS EIID domain. The stretch at 15–52 (QSDIRGVFLRSNLFQGSWNFERMQALGFCFSMVPAIRR) is an intramembrane region. Residues 53–59 (LYPENNE) lie on the Cytoplasmic side of the membrane. An intramembrane segment occupies 60–92 (ARKQAIRRHLEFFNTQPFVAAPILGVTLALEEQ). The Cytoplasmic portion of the chain corresponds to 93–100 (RANGAEID). A transmembrane helix spans residues 101–140 (DGAINGIKVGLMGPLAGVGDPIFWGTVRPVFAALGAGIAM). Residues 141 to 144 (SGSL) are Periplasmic-facing. The chain crosses the lipid bilayer at residues 145–173 (LGPLLFFILFNLVRLATRYYGVAYGYSKG). At 174–183 (IDIVKDMGGG) the chain is on the cytoplasmic side. Positions 184-209 (FLQKLTEGASILGLFVMGALVNKWTH) form a transmembrane segment. Residues 210–241 (VNIPLVVSRITDQTGKEHVTTVQTILDQLMPG) lie on the Periplasmic side of the membrane. At 242–255 (LVPLLLTFACMWLL) the chain is embedded in the membrane. Residues 256–261 (RKKVNP) lie on the Cytoplasmic side of the membrane. A membrane pass occupies residues 262–280 (LWIIVGFFVIGIAGYACGL). The Periplasmic segment spans residues 281–283 (LGL).

As to quaternary structure, homotrimer of protomers that are composed of two subunits, IIC and IID.

It localises to the cell inner membrane. The phosphoenolpyruvate-dependent sugar phosphotransferase system (sugar PTS), a major carbohydrate active transport system, catalyzes the phosphorylation of incoming sugar substrates concomitantly with their translocation across the cell membrane. The enzyme II ManXYZ PTS system is involved in mannose transport. The chain is PTS system mannose-specific EIID component (manZ) from Escherichia coli O157:H7.